Here is a 228-residue protein sequence, read N- to C-terminus: Non-specific lipid-transfer protein EPAD1 (228 aa).

A signal peptide spans 1-24 (MERSHLAVLLGLLAFAAGVPAAAA). 3 cysteine pairs are disulfide-bonded: Cys40–Cys62, Cys63–Cys105, and Cys78–Cys119. A glycan (N-linked (GlcNAc...) asparagine) is linked at Asn94. Positions 124–207 (PPASIVTAPP…PPRSGASSSL (84 aa)) are disordered. Pro residues predominate over residues 145 to 162 (REAPPPPPAAEKLSPPPQ).

This sequence belongs to the plant LTP family. As to expression, expressed in young panicles. Specifically expressed in pollen mother cells and young microspores.

It is found in the cell membrane. In terms of biological role, plant non-specific lipid-transfer protein that binds phospholipids in vitro. Required for correct pollen exine patterning by controlling the continuity and homogeneity of the primexine distribution. This chain is Non-specific lipid-transfer protein EPAD1, found in Oryza sativa subsp. japonica (Rice).